The sequence spans 653 residues: Amyloid beta A4 precursor protein-binding family B member 1-interacting protein (653 aa).

Positions 82–141 (NNKSTAPFPPADASNSYHFHPPPMPSIITEDLSLLPPPPEFDPHYPPPPPDPLTEPKTQE) are disordered. A compositionally biased stretch (pro residues) spans 116 to 134 (LPPPPEFDPHYPPPPPDPL). Residues 165–253 (KKRIVKVHMI…IHFLEKNEKY (89 aa)) form the Ras-associating domain. The PH domain occupies 295–404 (VPELEAALYL…WVTGIRIAKY (110 aa)). Over residues 462 to 481 (KHGEANKQEKKSSEVNKPET) the composition is skewed to basic and acidic residues. The segment at 462-653 (KHGEANKQEK…ALQKKREPPT (192 aa)) is disordered. Pro residues predominate over residues 585–604 (PAPPPPPPPPAPAANVPPLP). The segment covering 605 to 614 (VKKHPPKPPK) has biased composition (basic residues).

It belongs to the MRL family.

Its subcellular location is the cell membrane. It is found in the cytoplasm. The protein resides in the cytoskeleton. Functionally, appears to function in the signal transduction from Ras activation to actin cytoskeletal remodeling. This is Amyloid beta A4 precursor protein-binding family B member 1-interacting protein (apbb1ip) from Xenopus laevis (African clawed frog).